The sequence spans 237 residues: DCN1-like protein 5 (237 aa).

S9, S41, and S48 each carry phosphoserine. The DCUN1 domain maps to 46–232 (FSSKKCLAWF…LLDEFVEWQK (187 aa)).

As to quaternary structure, part of a complex that contains DCUN1D5, CUL1 and RBX1; this interaction is bridged by CUL1. Interacts (via the DCUN1 domain) with the unneddylated cullins: interacts with CUL1, CUL2, CUL3, CUL4A, CUL4B and CUL5; these interactions promote the cullin neddylation and the identity of the cullin dictates the affinity of the interaction. Interacts (via DCUN1 domain) with UBE2M (N-terminally acetylated form) and probably with UBE2F (N-terminally acetylated form). May also interact with regulators or subunits of cullin-RING ligases such as RBX1, RNF7, ELOB and DDB1; these interactions are bridged by cullins. Interacts with CAND1; this interaction is bridged by cullins and strongly inhibits the neddylation of cullins. These CAND-cullin-DCNL complexes can only be neddylated in the presence of a substrate adapter. In terms of processing, phosphorylation at Ser-41 is independent of cullin's interaction. Phosphorylated in response to both TICAM1 and MYD88 dependent Toll-like receptor (TLR) pathway activation. Phosphorylated in response to IL1B stimulation.

The protein resides in the nucleus. The protein localises to the cytoplasm. It localises to the cytoskeleton. It is found in the spindle. Functionally, contributes to the neddylation of all cullins by transferring NEDD8 from N-terminally acetylated NEDD8-conjugating E2s enzyme to different cullin C-terminal domain-RBX complexes which is necessary for the activation of cullin-RING E3 ubiquitin ligases (CRLs). May play a role in DNA damage response and may participate in cell proliferation and anchorage-independent cell growth. This is DCN1-like protein 5 from Pongo abelii (Sumatran orangutan).